The sequence spans 453 residues: Iron-sulfur cluster assembly SufBD family protein slr0076 (453 aa).

Belongs to the iron-sulfur cluster assembly SufBD family.

The polypeptide is Iron-sulfur cluster assembly SufBD family protein slr0076 (Synechocystis sp. (strain ATCC 27184 / PCC 6803 / Kazusa)).